Consider the following 500-residue polypeptide: FAD-linked oxidoreductase chyH (500 aa).

A signal peptide spans 1–20 (MRLQAVTAVAAWAVASACQS). In terms of domain architecture, FAD-binding PCMH-type spans 65-235 (LEVPTVNIVI…TSVTSKTYDI (171 aa)). 4 N-linked (GlcNAc...) asparagine glycosylation sites follow: Asn-199, Asn-266, Asn-275, and Asn-383.

Belongs to the oxygen-dependent FAD-linked oxidoreductase family. Requires FAD as cofactor.

The protein operates within pigment biosynthesis. Functionally, FAD-linked oxidoreductase; part of the gene cluster that mediates the biosynthesis of the yellow pigment chrysogine. the NRPS chyA mediates the condensation of anthranilic acid and alanine into the intermediate 2-(2-aminopropanamido)benzoic acid. The remainder of the pathway is highly branched yielding at least 13 chrysogine-related compounds. The malonyl transferase chyE converts 2-(2-aminopropanamido)benzoic acid and 2-(2-aminopropanamido)benzamidine into 2-(2-(2-carboxyacetamido)propanamido)benzoic acid and 3-((1-((2-carbamoylphenyl)amino)-1-oxopropan-2-yl)amino)-3-oxopropanoic acid, respectively. ChyD is an amidase, being responsible for the amidation of the carboxylic acid moiety of 2-(2-aminopropanamido)benzoic acid, 2-(2-(2-carboxyacetamido)propanamido)benzoic acid and 2-(2-((4-amino-1-carboxy-4-oxobutyl)amino)propanamido)benzoic acid. ChyC is involved in the same reactions as ChyD, but plays a more minor role in the amidation reactions compared to chyD. The oxidoreductases chyH and chyM are involved in oxidation reactions that form N-pyruvoylanthranilamide from 2-(2-aminopropanamido)benzamidine and (1-((2-carbamoylphenyl)amino)-1-oxopropan-2-yl)glutamine, respectively. N-pyruvoylanthranilamide is further converted via two further branches in the pathway, yielding chrysogine and additional chrysogine-related coumpounds. Chrysogine is likely formed by a spontaneous ring closure from N-pyruvoylanthranilamide. The sequence is that of FAD-linked oxidoreductase chyH from Penicillium rubens (strain ATCC 28089 / DSM 1075 / NRRL 1951 / Wisconsin 54-1255) (Penicillium chrysogenum).